Here is a 273-residue protein sequence, read N- to C-terminus: Ribosomal RNA small subunit methyltransferase A (273 aa).

Positions 18, 20, 45, 66, 91, and 113 each coordinate S-adenosyl-L-methionine.

Belongs to the class I-like SAM-binding methyltransferase superfamily. rRNA adenine N(6)-methyltransferase family. RsmA subfamily.

The protein localises to the cytoplasm. The catalysed reaction is adenosine(1518)/adenosine(1519) in 16S rRNA + 4 S-adenosyl-L-methionine = N(6)-dimethyladenosine(1518)/N(6)-dimethyladenosine(1519) in 16S rRNA + 4 S-adenosyl-L-homocysteine + 4 H(+). In terms of biological role, specifically dimethylates two adjacent adenosines (A1518 and A1519) in the loop of a conserved hairpin near the 3'-end of 16S rRNA in the 30S particle. May play a critical role in biogenesis of 30S subunits. The chain is Ribosomal RNA small subunit methyltransferase A from Escherichia coli (strain SE11).